The following is a 314-amino-acid chain: MTSLTIDLLSVLRREPWLYNNWFVTTHRWEVNLTFHLLTSIELWVQMRGIPLLYVCEETALEIAHELGKILTLDFHDSTTTQIAYIRVRIRFGITDRLRFFQRIIFDFGEAALISFQYERLRRICSSCFRMTHHRNSCPYRQIEPLHRVTNSTAQRNVREEVFMRDENLRSSMNSQSQMSESSFPTPIDPPPRIPHPPLNPDELVAAYYPHTRATSLPNFAGPLPQVPLRKNVDERDSNIQPFSGPAFAAHSPRLVEVGESSRQGENTQNVHTVEKGDSSKRKNMGGPRFKDDARKSNEDEHMNGGILKPPKKR.

Disordered stretches follow at residues 170 to 203 and 258 to 314; these read RSSMNSQSQMSESSFPTPIDPPPRIPHPPLNPDE and VGES…PKKR. Residues 171-186 are compositionally biased toward low complexity; that stretch reads SSMNSQSQMSESSFPT. Positions 187–200 are enriched in pro residues; sequence PIDPPPRIPHPPLN. The segment covering 261 to 272 has biased composition (polar residues); it reads SSRQGENTQNVH. Residues 289 to 303 are compositionally biased toward basic and acidic residues; the sequence is RFKDDARKSNEDEHM.

This is an uncharacterized protein from Arabidopsis thaliana (Mouse-ear cress).